A 235-amino-acid polypeptide reads, in one-letter code: Voltage-gated hydrogen channel 1 (235 aa).

Residues 1–62 (MSRYLKHFTV…VMKKLFSSRR (62 aa)) lie on the Cytoplasmic side of the membrane. Residues 63–83 (FQIVIVFLVIVDALLVLGELL) traverse the membrane as a helical segment. Residues 84–100 (MDLKIIHPDKYHIAPKV) are Extracellular-facing. A helical transmembrane segment spans residues 101–123 (FHYLSLSILTIFLVEVGFKIFVY). Topologically, residues 124–131 (GREFFHHK) are cytoplasmic. A helical transmembrane segment spans residues 132–152 (FEVLDSIVVVVSFILDLVLLF). At 153–159 (REHEFEA) the chain is on the extracellular side. A helical membrane pass occupies residues 160–180 (VGLLILLRLWRVARIINGIIL). The Cytoplasmic segment spans residues 181 to 235 (SVKTRSEQQVSKLKQVNLKLATKVEQLQHSCVEKEQEIERLTRMLKQHGLLSEQT). Residues 187 to 228 (EQQVSKLKQVNLKLATKVEQLQHSCVEKEQEIERLTRMLKQH) are a coiled coil.

Belongs to the hydrogen channel family. As to quaternary structure, homodimer.

It localises to the membrane. The protein resides in the cell membrane. Its function is as follows. Mediates the voltage-dependent proton permeability of excitable membranes. Forms a proton-selective channel through which protons may pass in accordance with their electrochemical gradient. This chain is Voltage-gated hydrogen channel 1 (HVCN1), found in Gallus gallus (Chicken).